The chain runs to 597 residues: Sodium/mannose cotransporter SLC5A10 (597 aa).

Topologically, residues 1–16 are extracellular; that stretch reads MAVDNSTSDAHTPGRQ. N5 is a glycosylation site (N-linked (GlcNAc...) asparagine). A helical transmembrane segment spans residues 17–37; it reads LTVVDIAIIAVYFALNVAVGI. Over 38–73 the chain is Cytoplasmic; it reads WSSCRASRNTVRGYFLAGRDMTWWPIGASLFASSEG. The chain crosses the membrane as a helical span at residues 74-94; that stretch reads SGLFIGLAGSGAAGGLAVAGF. The Extracellular portion of the chain corresponds to 95–100; the sequence is EWNATY. The N-linked (GlcNAc...) asparagine glycan is linked to N97. The chain crosses the membrane as a helical span at residues 101-121; that stretch reads VLLALAWVFVPIYLSSEIVTM. The Cytoplasmic portion of the chain corresponds to 122-139; that stretch reads PEYMQKRYGGQRIRMYLS. The chain crosses the membrane as a helical span at residues 140-162; that stretch reads VLSLLLSVFTKISIDLYAGALFV. Residues 163 to 174 lie on the Extracellular side of the membrane; that stretch reads HICLGWNFYLST. Residues 175-195 traverse the membrane as a helical segment; the sequence is VIMLAITALYTIAGGLTAVIY. The Cytoplasmic segment spans residues 196-201; that stretch reads TDALQT. A helical membrane pass occupies residues 202 to 222; the sequence is LVMVAGAVILTIKAFEQIGGY. Topologically, residues 223–265 are extracellular; that stretch reads EQLAEAYAQAVPSRTISNTTCHVPRADAMHMFRDPYTADLPWT. A helical transmembrane segment spans residues 266-286; the sequence is GMTFGLTIMAAWYWCTDQVIV. At 287–301 the chain is on the cytoplasmic side; that stretch reads QRSLSARDLNHAKGG. A helical transmembrane segment spans residues 302–322; sequence SILASYLKMLPMGLMVMPGMI. The Extracellular portion of the chain corresponds to 323-367; it reads SRVLFPDDVGCVVPAECLRACGAEIGCSNIAYPKLVMELMPTGLR. Residues 368-388 traverse the membrane as a helical segment; sequence GLMVAVMMAALMSSLTSIFNS. Over 389-410 the chain is Cytoplasmic; the sequence is SSTLFTMDIWRRLRPRAGEREL. A helical membrane pass occupies residues 411-431; the sequence is LLVGRLVIVVLVGVSVAWIPV. Over 432–444 the chain is Extracellular; sequence LQGSNGGQLFIYM. A helical membrane pass occupies residues 445–465; the sequence is QSVTSSLAPPVTAVFVLGIFW. The Cytoplasmic portion of the chain corresponds to 466–472; the sequence is RRANEQG. A helical membrane pass occupies residues 473 to 493; sequence AFWGLMAGLAVGATRLVLEFL. The Extracellular portion of the chain corresponds to 494–514; the sequence is HPAPPCGHPDTRPPILHGVHY. Residues 515 to 535 form a helical membrane-spanning segment; sequence LHFAVALFLLSGAVVVAGSLL. Residues 536-576 lie on the Cytoplasmic side of the membrane; the sequence is TPHPQGVQIQSLTWWTLAQDLPLGVKTGDGRASQRHAFWAR. Residues 577 to 597 form a helical membrane-spanning segment; that stretch reads VCGVNAILLMCVNIFFYTYFA.

This sequence belongs to the sodium:solute symporter (SSF) (TC 2.A.21) family. In terms of tissue distribution, predominantyl expressed in kidney. Also detected at very low levels in testes, skeletal muscle, and spleen.

It localises to the apical cell membrane. The enzyme catalyses D-mannose(out) + Na(+)(out) = D-mannose(in) + Na(+)(in). The catalysed reaction is D-fructopyranose(out) + Na(+)(out) = D-fructopyranose(in) + Na(+)(in). Electrogenic Na+-coupled sugar symporter that actively transports D-mannose or D-fructose at the plasma membrane, with a Na+ to sugar coupling ratio of 1:1. Transporter activity is driven by a transmembrane Na+ electrochemical gradient set by the Na+/K+ pump. Exclusively recognizes sugar substrates having a pyranose ring with an axial hydroxyl group on carbon 2. Has likely evolved to enable renal reabsorption of D-mannose, an important constituent of oligosaccharide chains of glycoproteins. Contributes to dietary D-fructose reabsorption from glomerular filtrate across the brush border of the kidney. The sequence is that of Sodium/mannose cotransporter SLC5A10 (SLC5A10) from Bos taurus (Bovine).